A 560-amino-acid polypeptide reads, in one-letter code: Serine/threonine-protein kinase TOS3 (560 aa).

In terms of domain architecture, Protein kinase spans 50-344 (FEILATLGNG…LADIKVHPFM (295 aa)). Residues 56 to 64 (LGNGQYGKV) and Lys-79 contribute to the ATP site. Asp-189 (proton acceptor) is an active-site residue.

It belongs to the protein kinase superfamily. Ser/Thr protein kinase family. Post-translationally, autophosphorylated.

It catalyses the reaction L-seryl-[protein] + ATP = O-phospho-L-seryl-[protein] + ADP + H(+). The catalysed reaction is L-threonyl-[protein] + ATP = O-phospho-L-threonyl-[protein] + ADP + H(+). In terms of biological role, one of the three SNF1 protein kinases (with SAK1 and ELM1) which are required for growth on nonfermentable carbon sources and nonpreferred sugars and for response to environmental stress. Activates SNF1 by phosphorylation of its activation-loop 'Thr-210'. Required for the regulation by SNF1 of the transcription of a large set of genes, the modification the activity of metabolic enzymes, and the control of various nutrient-responsive cellular developmental processes. Also phosphorylates GAL83, MIG1 and SIP2. This chain is Serine/threonine-protein kinase TOS3 (TOS3), found in Saccharomyces cerevisiae (strain ATCC 204508 / S288c) (Baker's yeast).